Consider the following 465-residue polypeptide: ATP synthase subunit beta (465 aa).

Position 152 to 159 (152 to 159) interacts with ATP; that stretch reads GGAGVGKT.

It belongs to the ATPase alpha/beta chains family. In terms of assembly, F-type ATPases have 2 components, CF(1) - the catalytic core - and CF(0) - the membrane proton channel. CF(1) has five subunits: alpha(3), beta(3), gamma(1), delta(1), epsilon(1). CF(0) has three main subunits: a(1), b(2) and c(9-12). The alpha and beta chains form an alternating ring which encloses part of the gamma chain. CF(1) is attached to CF(0) by a central stalk formed by the gamma and epsilon chains, while a peripheral stalk is formed by the delta and b chains.

Its subcellular location is the cell inner membrane. It carries out the reaction ATP + H2O + 4 H(+)(in) = ADP + phosphate + 5 H(+)(out). Functionally, produces ATP from ADP in the presence of a proton gradient across the membrane. The catalytic sites are hosted primarily by the beta subunits. The chain is ATP synthase subunit beta from Campylobacter fetus subsp. fetus (strain 82-40).